The sequence spans 295 residues: 33 kDa chaperonin (295 aa).

2 cysteine pairs are disulfide-bonded: Cys-237–Cys-239 and Cys-270–Cys-273.

This sequence belongs to the HSP33 family. Post-translationally, under oxidizing conditions two disulfide bonds are formed involving the reactive cysteines. Under reducing conditions zinc is bound to the reactive cysteines and the protein is inactive.

The protein localises to the cytoplasm. In terms of biological role, redox regulated molecular chaperone. Protects both thermally unfolding and oxidatively damaged proteins from irreversible aggregation. Plays an important role in the bacterial defense system toward oxidative stress. This Symbiobacterium thermophilum (strain DSM 24528 / JCM 14929 / IAM 14863 / T) protein is 33 kDa chaperonin.